Reading from the N-terminus, the 382-residue chain is Myb-like transcription factor (382 aa).

Myb-like domains lie at 1 to 57 (MPRS…RWSK), 58 to 108 (ITGA…QHCL), and 109 to 160 (DPSL…ITLF). Residues 194–210 (MSMDASEDGDDAEDDQT) are compositionally biased toward acidic residues. A disordered region spans residues 194–240 (MSMDASEDGDDAEDDQTPDSYTSISTSSFDDILGGSSSSPSAADTMT). Polar residues predominate over residues 211–240 (PDSYTSISTSSFDDILGGSSSSPSAADTMT).

It is found in the nucleus. Transcription factor; part of the gene cluster that mediates the biosynthesis of 1233A, a natural compound known as an inhibitor of HMG-CoA synthase in the mevalonate pathway and with antibacterial and antifungal activities. Involved in hygromycin B-induced transcriptional control of the cluster. This Fusarium sp protein is Myb-like transcription factor.